We begin with the raw amino-acid sequence, 695 residues long: Elongation factor G 1 (695 aa).

Residues 6–282 (STFRNIGISA…AITYYLPDPT (277 aa)) enclose the tr-type G domain. Residues 15 to 22 (AHIDSGKT), 82 to 86 (DTPGH), and 136 to 139 (NKCD) contribute to the GTP site.

This sequence belongs to the TRAFAC class translation factor GTPase superfamily. Classic translation factor GTPase family. EF-G/EF-2 subfamily.

It localises to the cytoplasm. Catalyzes the GTP-dependent ribosomal translocation step during translation elongation. During this step, the ribosome changes from the pre-translocational (PRE) to the post-translocational (POST) state as the newly formed A-site-bound peptidyl-tRNA and P-site-bound deacylated tRNA move to the P and E sites, respectively. Catalyzes the coordinated movement of the two tRNA molecules, the mRNA and conformational changes in the ribosome. This chain is Elongation factor G 1 (fusA), found in Treponema pallidum (strain Nichols).